Here is a 646-residue protein sequence, read N- to C-terminus: Stage V sporulation protein D (646 aa).

S294 functions as the Acyl-ester intermediate in the catalytic mechanism. Residues D580 to E638 enclose the PASTA domain.

Belongs to the transpeptidase family.

It localises to the cell membrane. The catalysed reaction is Preferential cleavage: (Ac)2-L-Lys-D-Ala-|-D-Ala. Also transpeptidation of peptidyl-alanyl moieties that are N-acyl substituents of D-alanine.. The protein operates within cell wall biogenesis; peptidoglycan biosynthesis. Its function is as follows. Penicillin-binding protein with an unknown catalytic activity. May have a specialized role in the morphogenesis of spore cortex, which is a modified form of peptidoglycan. Spore cortex formation is determined primarily by the mother cell. In Bacillus subtilis (strain 168), this protein is Stage V sporulation protein D (spoVD).